The chain runs to 207 residues: Probable GTP-binding protein EngB (207 aa).

Residues 22 to 194 (DLPEIAFAGR…WRRIEEVLPA (173 aa)) enclose the EngB-type G domain. GTP contacts are provided by residues 30–37 (GRSNVGKS), 57–61 (GRTQL), 75–78 (DLPG), 142–145 (TKCD), and 173–175 (FSA). Positions 37 and 59 each coordinate Mg(2+).

This sequence belongs to the TRAFAC class TrmE-Era-EngA-EngB-Septin-like GTPase superfamily. EngB GTPase family. The cofactor is Mg(2+).

Functionally, necessary for normal cell division and for the maintenance of normal septation. This chain is Probable GTP-binding protein EngB, found in Geotalea daltonii (strain DSM 22248 / JCM 15807 / FRC-32) (Geobacter daltonii).